An 882-amino-acid polypeptide reads, in one-letter code: Probable LRR receptor-like serine/threonine-protein kinase At1g12460 (882 aa).

The N-terminal stretch at 1–21 is a signal peptide; sequence MRKVHLFLVLVHFIYISTSRS. Topologically, residues 22–515 are extracellular; that stretch reads DSISERDILL…SRNSDALSIS (494 aa). N-linked (GlcNAc...) asparagine glycosylation is present at Asn-76. 16 LRR repeats span residues 92–113, 116–138, 140–162, 165–187, 189–210, 213–235, 237–258, 261–283, 285–308, 309–331, 333–355, 357–379, 381–404, 405–427, 429–451, and 453–475; these read FIRV…DYFK, TLWT…ISEL, SLRF…LFKF, KTKF…IVNC, NLVG…RICD, VLEY…IQKC, RLIL…AVLT, NITY…VDCS, SLEF…MGCK, SLKL…IGKM, SLSV…IGSL, FLQV…ISNC, VLLE…LNLT, NIKI…LGNL, KVQF…LGSL, and TLTH…PMIQ. A glycan (N-linked (GlcNAc...) asparagine) is linked at Asn-121. N-linked (GlcNAc...) asparagine glycans are attached at residues Asn-261 and Asn-266. 2 N-linked (GlcNAc...) asparagine glycosylation sites follow: Asn-321 and Asn-341. 3 N-linked (GlcNAc...) asparagine glycosylation sites follow: Asn-402, Asn-417, and Asn-426. 2 N-linked (GlcNAc...) asparagine glycosylation sites follow: Asn-458 and Asn-463. A helical transmembrane segment spans residues 516–536; the sequence is VIIVIIAAAVILFGVCIVLAL. Residues 537–882 are Cytoplasmic-facing; sequence NLRARKRRKD…LESIRNGFGS (346 aa). At Thr-589 the chain carries Phosphothreonine. The Protein kinase domain maps to 593–876; the sequence is LDKENIIGMG…AEVVQVLESI (284 aa). ATP-binding positions include 599–607 and Lys-621; that span reads IGMGSIGSV. Tyr-770 carries the post-translational modification Phosphotyrosine.

Belongs to the protein kinase superfamily. Ser/Thr protein kinase family.

It localises to the cell membrane. The enzyme catalyses L-seryl-[protein] + ATP = O-phospho-L-seryl-[protein] + ADP + H(+). The catalysed reaction is L-threonyl-[protein] + ATP = O-phospho-L-threonyl-[protein] + ADP + H(+). This chain is Probable LRR receptor-like serine/threonine-protein kinase At1g12460, found in Arabidopsis thaliana (Mouse-ear cress).